The primary structure comprises 624 residues: LEAF RUST 10 DISEASE-RESISTANCE LOCUS RECEPTOR-LIKE PROTEIN KINASE-like 2.2 (624 aa).

An N-terminal signal peptide occupies residues 1–30 (MDYLSSMGSQTARFCLILLFLFYYLPCALS). Over 31–263 (QDDLWGCGTP…IPNTRSILIT (233 aa)) the chain is Extracellular. N-linked (GlcNAc...) asparagine glycosylation is found at asparagine 45, asparagine 75, asparagine 85, asparagine 95, asparagine 150, and asparagine 164. A helical transmembrane segment spans residues 264–284 (IGQVVGFHVFIIVVMIIAFLF). Residues 285–624 (WRRKKVNDLR…EEDSSIYSEV (340 aa)) are Cytoplasmic-facing. Residues 317–599 (KSFTEVVGRG…SLDPPPKPLL (283 aa)) enclose the Protein kinase domain. ATP-binding positions include 323 to 331 (VGRGGFGTV) and lysine 345. Residue aspartate 434 is the Proton acceptor of the active site. Residues 587 to 624 (NLDSLDPPPKPLLHMPMQNNNAESSQPSEEDSSIYSEV) are disordered. A compositionally biased stretch (polar residues) spans 603-624 (MQNNNAESSQPSEEDSSIYSEV).

This sequence belongs to the protein kinase superfamily. Ser/Thr protein kinase family.

Its subcellular location is the membrane. The catalysed reaction is L-seryl-[protein] + ATP = O-phospho-L-seryl-[protein] + ADP + H(+). It carries out the reaction L-threonyl-[protein] + ATP = O-phospho-L-threonyl-[protein] + ADP + H(+). The sequence is that of LEAF RUST 10 DISEASE-RESISTANCE LOCUS RECEPTOR-LIKE PROTEIN KINASE-like 2.2 from Arabidopsis thaliana (Mouse-ear cress).